The chain runs to 364 residues: F-box protein At1g59680 (364 aa).

Residues threonine 2–alanine 49 enclose the F-box domain.

The chain is F-box protein At1g59680 from Arabidopsis thaliana (Mouse-ear cress).